A 1454-amino-acid chain; its full sequence is ABC transporter G family member 43 (1454 aa).

Residues 23 to 47 (ARSLRDGDDPFRRSAAASRRDAGDD) form a disordered region. Basic and acidic residues predominate over residues 25–44 (SLRDGDDPFRRSAAASRRDA). Asn-163 carries an N-linked (GlcNAc...) asparagine glycan. Positions 170–444 (EGLVSLFISS…FESAGFRCPE (275 aa)) constitute an ABC transporter 1 domain. 204-211 (GPPSSGKS) lines the ATP pocket. The N-linked (GlcNAc...) asparagine glycan is linked to Asn-393. Residues 524-735 (LKAVMSREWL…SNNALSVNEF (212 aa)) enclose the ABC transmembrane type-2 1 domain. Helical transmembrane passes span 540–560 (FLFI…MTLF), 577–597 (VGAL…ELQL), 613–630 (FFPA…KVPL), 637–656 (LWIV…GRFF), 659–679 (FLAY…LGAI), and 684–704 (VVAN…GGFL). Asn-745 carries an N-linked (GlcNAc...) asparagine glycan. Residues 775-795 (IGAMIGFMIVFNILYLCALTF) form a helical membrane-spanning segment. Positions 804-823 (TVVSDDDTKSELEAESNQEQ) are disordered. N-linked (GlcNAc...) asparagine glycans are attached at residues Asn-829 and Asn-832. The 253-residue stretch at 852–1104 (LSFNHMNYYV…ILVEYFEAIP (253 aa)) folds into the ABC transporter 2 domain. An ATP-binding site is contributed by 897-904 (GVSGAGKT). N-linked (GlcNAc...) asparagine glycosylation is present at Asn-951. Residues 1178–1391 (QCVANTWKQF…TIYGVIASQF (214 aa)) form the ABC transmembrane type-2 2 domain. A run of 7 helical transmembrane segments spans residues 1196 to 1216 (YNAM…TVFW), 1236 to 1256 (YAAV…VVSV), 1284 to 1304 (FCYS…MIGY), 1314 to 1334 (FLFF…MLVA), 1341 to 1361 (LAAV…GFII), 1372 to 1392 (WFYW…SQFA), and 1423 to 1443 (FLGY…FLFG).

This sequence belongs to the ABC transporter superfamily. ABCG family. PDR (TC 3.A.1.205) subfamily. In terms of tissue distribution, specifically expressed in the vasculature of roots, stems, panicles, sheaths and leaves.

The protein localises to the cell membrane. Its function is as follows. ABC transporter modulating cadmium (Cd) import, thus controlling Cd(2+) accumulation to prevent phytotoxicity. Confers high tolerance to Cd in yeast. Prevents leaf bacteria proliferation, such as Xanthomonas oryzae pv. oryzicola (Xoc) RS105 and X.oryzae pv. oryzae (Xoo) PXO99, by triggering Cd accumulation, which in turn impairs bacterial virulence factors. The protein is ABC transporter G family member 43 of Oryza sativa subsp. japonica (Rice).